We begin with the raw amino-acid sequence, 497 residues long: Probable malate:quinone oxidoreductase (497 aa).

Belongs to the MQO family. Requires FAD as cofactor.

It carries out the reaction (S)-malate + a quinone = a quinol + oxaloacetate. It participates in carbohydrate metabolism; tricarboxylic acid cycle; oxaloacetate from (S)-malate (quinone route): step 1/1. This chain is Probable malate:quinone oxidoreductase, found in Flavobacterium johnsoniae (strain ATCC 17061 / DSM 2064 / JCM 8514 / BCRC 14874 / CCUG 350202 / NBRC 14942 / NCIMB 11054 / UW101) (Cytophaga johnsonae).